The following is a 197-amino-acid chain: uncharacterized protein (197 aa).

A run of 6 helical transmembrane segments spans residues alanine 11–isoleucine 31, isoleucine 50–glycine 70, alanine 79–alanine 99, alanine 108–methionine 128, alanine 136–leucine 156, and threonine 158–phenylalanine 178.

The protein belongs to the chromate ion transporter (CHR) (TC 2.A.51) family.

Its subcellular location is the cell membrane. This is an uncharacterized protein from Bacillus subtilis (strain 168).